The primary structure comprises 1585 residues: Histone acetyltransferase lsy-12 (1585 aa).

Disordered regions lie at residues 1-37 and 279-491; these read MGKKRKPSPERSSDEDEVSTPSPKDRTARPTAAARRE and GPQH…DDPV. The segment covering 23–37 has biased composition (basic and acidic residues); sequence PKDRTARPTAAARRE. A compositionally biased stretch (polar residues) spans 279–296; that stretch reads GPQHENVTVSENVLSTES. A compositionally biased stretch (basic and acidic residues) spans 302 to 312; sequence TETKRLHDSSR. Composition is skewed to polar residues over residues 355–364 and 411–426; these read LLSNPHSTPV and SRLSALTIDTNRSNDL. Positions 431–440 are enriched in low complexity; sequence SAPSSSSAAS. Residues 453 to 469 show a composition bias toward basic residues; the sequence is QQRRKGNQSAARSRKIK. Residues 477–491 are compositionally biased toward acidic residues; sequence QEDEPMELDSDDDPV. Residues 544-830 form the MYST-type HAT domain; it reads EQARLPERIH…YDPECLDWVP (287 aa). Residues 577–602 form a C2HC MYST-type zinc finger; the sequence is LFICEFCFFYARSDEIMQNHAKKCML. Lys644 carries the post-translational modification N6-acetyllysine; by autocatalysis. 685–689 is a binding site for acetyl-CoA; it reads SCIMT. The active-site Proton donor/acceptor is the Glu720. Residues Ser724 and Lys815 each coordinate acetyl-CoA. Basic and acidic residues-rich tracts occupy residues 844 to 855 and 947 to 956; these read SKEEIEQDEQRR and VLDKSNIREE. Disordered stretches follow at residues 844–903, 927–1262, 1286–1373, and 1431–1507; these read SKEE…LKHE, EENK…IGKS, ESTA…ASNH, and HHQF…VHPQ. Positions 977-999 are enriched in polar residues; that stretch reads NKCNNTESEPNPSGRKTSATSSG. Residues 1011 to 1022 are compositionally biased toward acidic residues; that stretch reads TEEEEEDDDPTD. Residues 1029 to 1046 show a composition bias toward basic and acidic residues; it reads DDEKPFETSVNKEKNEKS. Basic residues predominate over residues 1047–1060; that stretch reads RRGKKVSKKRRSVA. Composition is skewed to basic and acidic residues over residues 1070–1081 and 1135–1151; these read VRDRDEPKKAEN and DIPKSDEDHQSTEAYDR. The span at 1164–1173 shows a compositional bias: low complexity; the sequence is PTPDSYHSSP. Residues 1185–1194 show a composition bias toward polar residues; sequence LMQAQQNIYQ. Residues 1196–1207 are compositionally biased toward basic and acidic residues; that stretch reads NDCHFAENDSKP. Composition is skewed to polar residues over residues 1298–1317 and 1324–1333; these read AGPSTSSHVTPQMSMINTTP and HPNSQQQATP. The segment covering 1482 to 1493 has biased composition (low complexity); sequence QHQQQQPQQPQQ.

This sequence belongs to the MYST (SAS/MOZ) family.

It catalyses the reaction L-lysyl-[protein] + acetyl-CoA = N(6)-acetyl-L-lysyl-[protein] + CoA + H(+). Probable histone acetyltransferase. Required to initiate and then maintain lateralized gene expression in the ASE sensory neurons. Involved in determining cell fate in the ASE neurons. This is Histone acetyltransferase lsy-12 from Caenorhabditis elegans.